Consider the following 201-residue polypeptide: Putative ferritin heavy polypeptide-like 19 (201 aa).

Residues 1–123 (MAFYFDQDDA…GYLSNLHKMG (123 aa)) form the Ferritin-like diiron domain.

It belongs to the ferritin family.

This is Putative ferritin heavy polypeptide-like 19 (FTH1P19) from Homo sapiens (Human).